The following is a 329-amino-acid chain: MAELFWFEKYRPRSFDEVVDLEEVKARLREFVKAGNMPHLLFYGPPGTGKTTMALVLARELYGEYWRENTLELNASDERGINVIRERVKEFARTAPVGKAPFKLVILDEADNMTSDAQQALRRIMEIYAQNTRFILLANYVSRIIDPIISRCAVFRFSPMPRSLMAERLKFIAKNEGVELREDAINMIYELSEGDMRKAINLLQVAAATNKVVDANAVASAAIAVRPADIIELFNLAISGDFVKAREKLRELMYLKGIAGADFIRAFQRELIRMPIDDDIKAEIAELLADVDYRLTQGADEEIQLTYLLTKLGAIGRRVKPATTQPRKK.

44-51 is an ATP binding site; that stretch reads GPPGTGKT.

It belongs to the activator 1 small subunits family. RfcS subfamily. Heteromultimer composed of small subunits (RfcS) and large subunits (RfcL).

Functionally, part of the RFC clamp loader complex which loads the PCNA sliding clamp onto DNA. The sequence is that of Replication factor C small subunit 1 from Pyrobaculum aerophilum (strain ATCC 51768 / DSM 7523 / JCM 9630 / CIP 104966 / NBRC 100827 / IM2).